The sequence spans 190 residues: GTP cyclohydrolase 1 (190 aa).

Zn(2+) is bound by residues Cys75, His78, and Cys146.

It belongs to the GTP cyclohydrolase I family. As to quaternary structure, homomer.

It catalyses the reaction GTP + H2O = 7,8-dihydroneopterin 3'-triphosphate + formate + H(+). It participates in cofactor biosynthesis; 7,8-dihydroneopterin triphosphate biosynthesis; 7,8-dihydroneopterin triphosphate from GTP: step 1/1. The sequence is that of GTP cyclohydrolase 1 from Campylobacter lari (strain RM2100 / D67 / ATCC BAA-1060).